The chain runs to 227 residues: Endonuclease V (227 aa).

Mg(2+) is bound by residues D46 and D114.

Belongs to the endonuclease V family. It depends on Mg(2+) as a cofactor.

The protein localises to the cytoplasm. It carries out the reaction Endonucleolytic cleavage at apurinic or apyrimidinic sites to products with a 5'-phosphate.. In terms of biological role, DNA repair enzyme involved in the repair of deaminated bases. Selectively cleaves double-stranded DNA at the second phosphodiester bond 3' to a deoxyinosine leaving behind the intact lesion on the nicked DNA. The protein is Endonuclease V of Alkalilimnicola ehrlichii (strain ATCC BAA-1101 / DSM 17681 / MLHE-1).